The primary structure comprises 1185 residues: Chromosome partition protein Smc (1185 aa).

ATP is bound at residue 32–39 (PNGSGKSN). The stretch at 167–494 (ISKYKSRKMD…KLNEKNSHLS (328 aa)) forms a coiled coil. Positions 521 to 639 (TGIIGVVADQ…TDLKSAIEIA (119 aa)) constitute an SMC hinge domain. Positions 677 to 1031 (RSRKIEDLKK…KVIQEIEETM (355 aa)) form a coiled coil.

Belongs to the SMC family. Homodimer.

It is found in the cytoplasm. In terms of biological role, required for chromosome condensation and partitioning. In Halothermothrix orenii (strain H 168 / OCM 544 / DSM 9562), this protein is Chromosome partition protein Smc.